Reading from the N-terminus, the 344-residue chain is Pre-mRNA-splicing factor cwc-21 (344 aa).

Positions 1-19 (MSDNVGLSTPRGSGTSGYV) are enriched in polar residues. Disordered regions lie at residues 1-58 (MSDN…LEHD) and 98-344 (EMER…DNRD). A compositionally biased stretch (basic and acidic residues) spans 38–58 (KDFDSLKHQPRQPDKGLLEHD). The CWF21 domain maps to 55–98 (LEHDRKREVEVKVFELRDKLEEEGVEEDEIETRCDELRRKLLAE). Residues 69 to 105 (ELRDKLEEEGVEEDEIETRCDELRRKLLAEMERNQNS) are a coiled coil. 3 stretches are compositionally biased toward basic and acidic residues: residues 120 to 167 (QVHE…REAN), 188 to 226 (RGGD…DRPP), and 238 to 277 (GGRD…DTGR). Residues 288-306 (SRSRSRSRSYSRSRSPPRR) are compositionally biased toward basic residues. Composition is skewed to basic and acidic residues over residues 307–316 (RAADSQDRSL) and 327–344 (SPDR…DNRD).

It belongs to the CWC21 family. In terms of assembly, associates with the NTC complex (or PRP19-associated complex). The NTC complex associates with the spliceosome after the release of the U1 and U4 snRNAs and forms the CWC spliceosome subcomplex reminiscent of a late-stage spliceosome.

Its subcellular location is the cytoplasm. The protein resides in the nucleus. Its function is as follows. Involved in pre-mRNA splicing. May function at or prior to the first catalytic step of splicing at the catalytic center of the spliceosome. May do so by stabilizing the catalytic center or the position of the RNA substrate. The polypeptide is Pre-mRNA-splicing factor cwc-21 (cwc-21) (Neurospora crassa (strain ATCC 24698 / 74-OR23-1A / CBS 708.71 / DSM 1257 / FGSC 987)).